A 198-amino-acid chain; its full sequence is Segregation and condensation protein B (198 aa).

The segment at 168–198 is disordered; sequence KLADPATDEPDQNEMDLFFDRFNQSKEQEEE.

It belongs to the ScpB family. Homodimer. Homodimerization may be required to stabilize the binding of ScpA to the Smc head domains. Component of a cohesin-like complex composed of ScpA, ScpB and the Smc homodimer, in which ScpA and ScpB bind to the head domain of Smc. The presence of the three proteins is required for the association of the complex with DNA.

The protein resides in the cytoplasm. Functionally, participates in chromosomal partition during cell division. May act via the formation of a condensin-like complex containing Smc and ScpA that pull DNA away from mid-cell into both cell halves. This chain is Segregation and condensation protein B, found in Listeria monocytogenes serovar 1/2a (strain ATCC BAA-679 / EGD-e).